We begin with the raw amino-acid sequence, 527 residues long: ATP synthase subunit alpha (527 aa).

Residue 172-179 (GDRQTGKT) coordinates ATP.

The protein belongs to the ATPase alpha/beta chains family. F-type ATPases have 2 components, CF(1) - the catalytic core - and CF(0) - the membrane proton channel. CF(1) has five subunits: alpha(3), beta(3), gamma(1), delta(1), epsilon(1). CF(0) has three main subunits: a(1), b(2) and c(9-12). The alpha and beta chains form an alternating ring which encloses part of the gamma chain. CF(1) is attached to CF(0) by a central stalk formed by the gamma and epsilon chains, while a peripheral stalk is formed by the delta and b chains.

The protein localises to the cell inner membrane. It catalyses the reaction ATP + H2O + 4 H(+)(in) = ADP + phosphate + 5 H(+)(out). Its function is as follows. Produces ATP from ADP in the presence of a proton gradient across the membrane. The alpha chain is a regulatory subunit. This is ATP synthase subunit alpha from Bacteroides fragilis (strain ATCC 25285 / DSM 2151 / CCUG 4856 / JCM 11019 / LMG 10263 / NCTC 9343 / Onslow / VPI 2553 / EN-2).